The following is a 127-amino-acid chain: uncharacterized protein (127 aa).

The segment at 69 to 94 (GDGGSVPEKGKHGILGAQGQEHPGLN) is disordered.

This is an uncharacterized protein from Homo sapiens (Human).